The following is a 139-amino-acid chain: Transcription antitermination protein NusB (139 aa).

It belongs to the NusB family.

Involved in transcription antitermination. Required for transcription of ribosomal RNA (rRNA) genes. Binds specifically to the boxA antiterminator sequence of the ribosomal RNA (rrn) operons. The chain is Transcription antitermination protein NusB from Escherichia fergusonii (strain ATCC 35469 / DSM 13698 / CCUG 18766 / IAM 14443 / JCM 21226 / LMG 7866 / NBRC 102419 / NCTC 12128 / CDC 0568-73).